The sequence spans 172 residues: Galectin-related protein (172 aa).

At A2 the chain carries N-acetylalanine. Phosphoserine is present on residues S22 and S25. A Galectin domain is found at 39–168 (PFCGHIKGGM…TIKINGDLQI (130 aa)).

As to quaternary structure, monomer.

Its function is as follows. Does not bind lactose, and may not bind carbohydrates. The sequence is that of Galectin-related protein (Lgalsl) from Mus musculus (Mouse).